The following is a 408-amino-acid chain: UDP-N-acetylglucosamine--dolichyl-phosphate N-acetylglucosaminephosphotransferase (408 aa).

Residues 1 to 10 (MWAFSELPMP) lie on the Lumenal side of the membrane. Residues 11–38 (LLINLIVSLLGFVATVTLIPAFRGHFIA) traverse the membrane as a helical segment. The Cytoplasmic segment spans residues 39–58 (ARLCGQDLNKTSRQQIPESQ). UDP-N-acetyl-alpha-D-glucosamine-binding positions include 44–46 (QDL) and Glu-56. Leu-46 serves as a coordination point for tunicamycin A1. Residues 59 to 78 (GVISGAVFLIILFCFIPFPF) form a helical membrane-spanning segment. Residues 79-91 (LNCFVKEQCKAFP) lie on the Lumenal side of the membrane. The helical transmembrane segment at 92–118 (HHEFVALIGALLAICCMIFLGFADDVL) threads the bilayer. Asn-119 lines the tunicamycin A1 pocket. Residues 119–121 (NLR) lie on the Cytoplasmic side of the membrane. Residues 122–143 (WRHKLLLPTAASLPLLMVYFTN) form a helical membrane-spanning segment. Lys-125 contacts dolichyl phosphate. Over 144 to 166 (FGNTTIVVPKPFRPILGLHLDLG) the chain is Lumenal. An N-linked (GlcNAc...) asparagine glycan is attached at Asn-146. A helical transmembrane segment spans residues 167–186 (ILYYVYMGLLAVFCTNAINI). Residue 178–186 (VFCTNAINI) coordinates dolichyl phosphate. Residue Asn-185 participates in tunicamycin A1 binding. Asn-185 provides a ligand contact to Mg(2+). Residues 187–192 (LAGING) are Cytoplasmic-facing. Asn-191 is a binding site for UDP-N-acetyl-alpha-D-glucosamine. The chain crosses the membrane as a helical span at residues 193-213 (LEAGQSLVISASIIVFNLVEL). The Lumenal segment spans residues 214 to 218 (EGDCR). A helical transmembrane segment spans residues 219–242 (DDHVFSLYFMIPFFFTTLGLLYHN). Over 243–250 (WYPSRVFV) the chain is Cytoplasmic. The chain crosses the membrane as a helical span at residues 251 to 269 (GDTFCYFAGMTFAVVGILG). Asp-252 contributes to the tunicamycin A1 binding site. Asp-252 is a Mg(2+) binding site. At 270–271 (HF) the chain is on the lumenal side. A helical transmembrane segment spans residues 272–293 (SKTMLLFFMPQVFNFLYSLPQL). Topologically, residues 294–375 (LHIIPCPRHR…LLLKVLGPIH (82 aa)) are cytoplasmic. 301–303 (RHR) serves as a coordination point for UDP-N-acetyl-alpha-D-glucosamine. Arg-303 provides a ligand contact to tunicamycin A1. The helical transmembrane segment at 376-400 (ERNLTLLLLLLQILGSAITFSIRYQ) threads the bilayer. At 401-408 (LVRLFYDV) the chain is on the lumenal side.

This sequence belongs to the glycosyltransferase 4 family. As to quaternary structure, homodimer. Mg(2+) serves as cofactor.

It localises to the endoplasmic reticulum membrane. The enzyme catalyses a di-trans,poly-cis-dolichyl phosphate + UDP-N-acetyl-alpha-D-glucosamine = an N-acetyl-alpha-D-glucosaminyl-diphospho-di-trans,poly-cis-dolichol + UMP. It functions in the pathway protein modification; protein glycosylation. With respect to regulation, inhibited by natural nucleoside antibiotic tunicamycin, which acts as a structural analog and competitor of UDP-GlcNAc. Activated by mannosylphosphoryldolichol and phospholipids such as phosphatidylglycerol and phosphatidylcholine. UDP-N-acetylglucosamine--dolichyl-phosphate N-acetylglucosaminephosphotransferase that operates in the biosynthetic pathway of dolichol-linked oligosaccharides, the glycan precursors employed in protein asparagine (N)-glycosylation. The assembly of dolichol-linked oligosaccharides begins on the cytosolic side of the endoplasmic reticulum membrane and finishes in its lumen. The sequential addition of sugars to dolichol pyrophosphate produces dolichol-linked oligosaccharides containing fourteen sugars, including two GlcNAcs, nine mannoses and three glucoses. Once assembled, the oligosaccharide is transferred from the lipid to nascent proteins by oligosaccharyltransferases. Catalyzes the initial step of dolichol-linked oligosaccharide biosynthesis, transfering GlcNAc-1-P from cytosolic UDP-GlcNAc onto the carrier lipid dolichyl phosphate (P-dolichol), yielding GlcNAc-P-P-dolichol embedded in the cytoplasmic leaflet of the endoplasmic reticulum membrane. This is UDP-N-acetylglucosamine--dolichyl-phosphate N-acetylglucosaminephosphotransferase from Homo sapiens (Human).